Reading from the N-terminus, the 598-residue chain is Aspartate--tRNA(Asp/Asn) ligase (598 aa).

An L-aspartate-binding site is contributed by Glu172. The segment at 196–199 (QLFK) is aspartate. Arg218 contributes to the L-aspartate binding site. Residues 218-220 (RDE) and Gln227 contribute to the ATP site. Position 454 (His454) interacts with L-aspartate. Residue Glu488 participates in ATP binding. Arg495 lines the L-aspartate pocket. 540-543 (GLDR) contacts ATP.

It belongs to the class-II aminoacyl-tRNA synthetase family. Type 1 subfamily. In terms of assembly, homodimer.

It localises to the cytoplasm. It catalyses the reaction tRNA(Asx) + L-aspartate + ATP = L-aspartyl-tRNA(Asx) + AMP + diphosphate. Aspartyl-tRNA synthetase with relaxed tRNA specificity since it is able to aspartylate not only its cognate tRNA(Asp) but also tRNA(Asn). Reaction proceeds in two steps: L-aspartate is first activated by ATP to form Asp-AMP and then transferred to the acceptor end of tRNA(Asp/Asn). This Leptothrix cholodnii (strain ATCC 51168 / LMG 8142 / SP-6) (Leptothrix discophora (strain SP-6)) protein is Aspartate--tRNA(Asp/Asn) ligase.